We begin with the raw amino-acid sequence, 420 residues long: Gamma-glutamyl phosphate reductase (420 aa).

Belongs to the gamma-glutamyl phosphate reductase family.

The protein resides in the cytoplasm. It carries out the reaction L-glutamate 5-semialdehyde + phosphate + NADP(+) = L-glutamyl 5-phosphate + NADPH + H(+). It participates in amino-acid biosynthesis; L-proline biosynthesis; L-glutamate 5-semialdehyde from L-glutamate: step 2/2. Functionally, catalyzes the NADPH-dependent reduction of L-glutamate 5-phosphate into L-glutamate 5-semialdehyde and phosphate. The product spontaneously undergoes cyclization to form 1-pyrroline-5-carboxylate. This Streptococcus pneumoniae (strain P1031) protein is Gamma-glutamyl phosphate reductase.